Reading from the N-terminus, the 143-residue chain is uncharacterized protein (143 aa).

The first 24 residues, 1–24 (MKKMLMLAFTFLLALTIHVGEASA), serve as a signal peptide directing secretion.

This is an uncharacterized protein from Bacillus subtilis (strain 168).